The following is a 163-amino-acid chain: Allophycocyanin alpha-B chain (163 aa).

An N4-methylasparagine modification is found at asparagine 71. Cysteine 81 contacts (2R,3E)-phycocyanobilin.

Belongs to the phycobiliprotein family. In terms of assembly, heterodimer of an alpha and a beta chain. Contains one covalently linked bilin chromophore.

It is found in the cellular thylakoid membrane. Functionally, light-harvesting photosynthetic bile pigment-protein from the phycobiliprotein complex. Allophycocyanin has a maximum absorption at approximately 650 nanometers. The chain is Allophycocyanin alpha-B chain from Synechococcus sp. (strain ATCC 27144 / PCC 6301 / SAUG 1402/1) (Anacystis nidulans).